Here is a 313-residue protein sequence, read N- to C-terminus: Methionyl-tRNA formyltransferase (313 aa).

A disordered region spans residues 32–51 (QPDRRKGRGKELQPPPAKRK). Position 109–112 (109–112 (SLLP)) interacts with (6S)-5,6,7,8-tetrahydrofolate.

This sequence belongs to the Fmt family.

The catalysed reaction is L-methionyl-tRNA(fMet) + (6R)-10-formyltetrahydrofolate = N-formyl-L-methionyl-tRNA(fMet) + (6S)-5,6,7,8-tetrahydrofolate + H(+). Attaches a formyl group to the free amino group of methionyl-tRNA(fMet). The formyl group appears to play a dual role in the initiator identity of N-formylmethionyl-tRNA by promoting its recognition by IF2 and preventing the misappropriation of this tRNA by the elongation apparatus. The sequence is that of Methionyl-tRNA formyltransferase from Natranaerobius thermophilus (strain ATCC BAA-1301 / DSM 18059 / JW/NM-WN-LF).